Consider the following 430-residue polypeptide: ATP-dependent RNA helicase RhlB (430 aa).

The Q motif motif lies at 9–37 (QKFSDFALHPQVIEALESKGFHNCTPIQA). A Helicase ATP-binding domain is found at 40 to 219 (LPLALSGRDV…FEQMNNAEYV (180 aa)). 53–60 (AQTGTGKT) provides a ligand contact to ATP. The DEAD box signature appears at 165-168 (DEAD). The Helicase C-terminal domain maps to 245-390 (RLLQTLLEEE…VSKYNSDALM (146 aa)). Residues 392–430 (DLPAPKRLTRPPRSNNGPRRHNNAPRRSGAPRNNRKRAD) are disordered.

The protein belongs to the DEAD box helicase family. RhlB subfamily. As to quaternary structure, component of the RNA degradosome, which is a multiprotein complex involved in RNA processing and mRNA degradation.

It localises to the cytoplasm. It catalyses the reaction ATP + H2O = ADP + phosphate + H(+). Its function is as follows. DEAD-box RNA helicase involved in RNA degradation. Has RNA-dependent ATPase activity and unwinds double-stranded RNA. The protein is ATP-dependent RNA helicase RhlB of Pectobacterium carotovorum subsp. carotovorum (strain PC1).